A 107-amino-acid chain; its full sequence is Phosphoribosyl-ATP pyrophosphatase (107 aa).

Belongs to the PRA-PH family.

The protein resides in the cytoplasm. The enzyme catalyses 1-(5-phospho-beta-D-ribosyl)-ATP + H2O = 1-(5-phospho-beta-D-ribosyl)-5'-AMP + diphosphate + H(+). Its pathway is amino-acid biosynthesis; L-histidine biosynthesis; L-histidine from 5-phospho-alpha-D-ribose 1-diphosphate: step 2/9. This is Phosphoribosyl-ATP pyrophosphatase (hisE) from Rhizobium meliloti (strain 1021) (Ensifer meliloti).